A 341-amino-acid chain; its full sequence is MVRLSDTPAPTESQKRLALAIIDFLNSSLKDGTLTADDAESIEIAQSCIADTFKVDPSDEAAVKDALGGQSLASIFSVYEKLRQKPSKEPASAGAQAQSTEAQQPKAGAPTPESDKLKSEGNAAMARKEYSKAIDLYTQALSIAPANPIYLSNRAAAYSASGQHEKAAEDAELATVVDPKYSKAWSRLGLARFDMADYKGAKEAYEKGIEAEGNGGSDAMKRGLETTKRKIEEANRGAEPPADDVDDAAGASRGAGGMPDLSSLASMLGGRGGGGGGMPDLSSIMSNPMFASMAQNLMSNPDMLNNLMNNPQLRQMAENFGRGGGMPDMSSLMSDPSLAEM.

The tract at residues 86 to 123 (PSKEPASAGAQAQSTEAQQPKAGAPTPESDKLKSEGNA) is disordered. 3 TPR repeats span residues 114–147 (SDKL…APAN), 148–181 (PIYL…DPKY), and 182–215 (SKAW…EGNG). Residues 232–280 (EEANRGAEPPADDVDDAAGASRGAGGMPDLSSLASMLGGRGGGGGGMPD) form a disordered region. A compositionally biased stretch (gly residues) spans 269 to 278 (GGRGGGGGGM).

Belongs to the SGT family. In terms of assembly, forms homodimers. Component of the get4/get5/sgt2 sorting complex. Dimers of sgt2 bind directly a single get5. Binds HSC family members ssa1, sse1, hsp104 and hsc82 via its TPR domain.

Its subcellular location is the cytoplasm. Functionally, heat-shock protein cognate (HSC) co-chaperone that preferentially binds endoplasmic reticulum-destined tail-anchored (TA) proteins and directs them to the GET (guided entry of TA proteins) pathway via get4 and get5. Get4 and get5 form an obligate complex that catalyzes the transfer of tail-anchored proteins destined to the endoplasmic reticulum from sgt2 to the cytosolic targeting factor which then targets the TA protein to the ER membrane via get1/get2. This Aspergillus fumigatus (strain ATCC MYA-4609 / CBS 101355 / FGSC A1100 / Af293) (Neosartorya fumigata) protein is Heat-shock protein cognate (HSC) co-chaperone sgt12.